Reading from the N-terminus, the 476-residue chain is RuvB-like helicase 2 (476 aa).

Position 76-83 (76-83 (GPPSTGKT)) interacts with ATP.

It belongs to the RuvB family. In terms of assembly, may form heterododecamers with RVB1. Component of the SWR1 chromatin remodeling complex, the INO80 chromatin remodeling complex, and of the R2TP complex.

It localises to the nucleus. The enzyme catalyses ATP + H2O = ADP + phosphate + H(+). DNA helicase which participates in several chromatin remodeling complexes, including the SWR1 and the INO80 complexes. The SWR1 complex mediates the ATP-dependent exchange of histone H2A for the H2A variant HZT1 leading to transcriptional regulation of selected genes by chromatin remodeling. The INO80 complex remodels chromatin by shifting nucleosomes and is involved in DNA repair. Also involved in pre-rRNA processing. The sequence is that of RuvB-like helicase 2 (RVB2) from Candida glabrata (strain ATCC 2001 / BCRC 20586 / JCM 3761 / NBRC 0622 / NRRL Y-65 / CBS 138) (Yeast).